Consider the following 445-residue polypeptide: Glutamate-1-semialdehyde 2,1-aminomutase (445 aa).

Lysine 281 carries the N6-(pyridoxal phosphate)lysine modification.

The protein belongs to the class-III pyridoxal-phosphate-dependent aminotransferase family. HemL subfamily. Homodimer. Pyridoxal 5'-phosphate is required as a cofactor.

It localises to the cytoplasm. The catalysed reaction is (S)-4-amino-5-oxopentanoate = 5-aminolevulinate. It functions in the pathway porphyrin-containing compound metabolism; protoporphyrin-IX biosynthesis; 5-aminolevulinate from L-glutamyl-tRNA(Glu): step 2/2. This Nocardioides sp. (strain ATCC BAA-499 / JS614) protein is Glutamate-1-semialdehyde 2,1-aminomutase.